The primary structure comprises 89 residues: MSLSTEATAKIVSEFGRDANDTGSTDVQVALLTAQINHLQGHFAEHKKDHHSRRGLLRMVSQRRKLLDYLKRKDVARYTALIERLGLRR.

This sequence belongs to the universal ribosomal protein uS15 family. In terms of assembly, part of the 30S ribosomal subunit. Forms a bridge to the 50S subunit in the 70S ribosome, contacting the 23S rRNA.

In terms of biological role, one of the primary rRNA binding proteins, it binds directly to 16S rRNA where it helps nucleate assembly of the platform of the 30S subunit by binding and bridging several RNA helices of the 16S rRNA. Forms an intersubunit bridge (bridge B4) with the 23S rRNA of the 50S subunit in the ribosome. This Salmonella schwarzengrund (strain CVM19633) protein is Small ribosomal subunit protein uS15.